The chain runs to 148 residues: Hemoglobin subunit beta-B (148 aa).

The region spanning 3–148 (DWTDAERAAI…VVSALGRQYH (146 aa)) is the Globin domain. Heme b-binding residues include histidine 64 and histidine 93.

This sequence belongs to the globin family. As to quaternary structure, heterotetramer of two alpha chains and two beta chains. Red blood cells.

Functionally, involved in oxygen transport from gills to the various peripheral tissues. The polypeptide is Hemoglobin subunit beta-B (hbb2) (Seriola quinqueradiata (Five-ray yellowtail)).